We begin with the raw amino-acid sequence, 477 residues long: S-triazine hydrolase (477 aa).

2 stretches are compositionally biased toward low complexity: residues 38–73 (SPTT…KSSS) and 120–132 (PLSS…DPTT). 2 disordered regions span residues 38–77 (SPTT…GVVH) and 120–143 (PLSS…GSPF).

The protein belongs to the metallo-dependent hydrolases superfamily. ATZ/TRZ family.

It participates in xenobiotic degradation; melamine degradation. Hydrolytic deamination of the S-triazine substrate melamine. The polypeptide is S-triazine hydrolase (trzA) (Gordonia rubripertincta (Rhodococcus corallinus)).